A 193-amino-acid chain; its full sequence is MNFLAHLHLAHLAESSLSGNLLADFVRGNPEESFPPDVVAGIHMHRRIDVLTDNLPEVREAREWFRSETRRVAPITLDVMWDHFLSRHWSQLSPDFPLQEFVCYAREQVMTILPDSPPRFINLNNYLWSEQWLVRYRDMDFIQNVLNGMASRRPRLDALRDSWYDLDAHYDALETRFWQFYPRMMAQASRKAL.

This sequence belongs to the AcpH family.

It carries out the reaction holo-[ACP] + H2O = apo-[ACP] + (R)-4'-phosphopantetheine + H(+). In terms of biological role, converts holo-ACP to apo-ACP by hydrolytic cleavage of the phosphopantetheine prosthetic group from ACP. In Escherichia coli O7:K1 (strain IAI39 / ExPEC), this protein is Acyl carrier protein phosphodiesterase.